We begin with the raw amino-acid sequence, 338 residues long: Acyl-CoA Delta(11) desaturase (338 aa).

The next 2 membrane-spanning stretches (helical) occupy residues 33-53 (IVYFNIITFAYWHIAGLYGLY) and 61-81 (WATVLFSFFLFVVAEVGVTAG). The short motif at 83–88 (HRLWSH) is the Histidine box-1 element. A helical transmembrane segment spans residues 97–117 (LQILLMVMNSLAFQNTVIDWV). The short motif at 120–124 (HRLHH) is the Histidine box-2 element. Helical transmembrane passes span 181–201 (AIPFIGAVCFVLPTLIPVYGW) and 212–234 (AMLRYIMNLNVTFLVNSAAHIYG). A Histidine box-3 motif is present at residues 260–264 (HNYHH). The disordered stretch occupies residues 318 to 338 (TNLWGLEDVDTPEDLKNTKGE).

Belongs to the fatty acid desaturase type 1 family. Fe cation is required as a cofactor. Detected in the pheromone gland.

The protein localises to the membrane. It carries out the reaction an 11,12-saturated fatty acyl-CoA + 2 Fe(II)-[cytochrome b5] + O2 + 2 H(+) = an (11Z)-Delta(11)-fatty acyl-CoA + 2 Fe(III)-[cytochrome b5] + 2 H2O. In terms of biological role, catalyzes the formation of delta(11) fatty acyl precursors in the pheromone gland, and has high activity towards palmitic acid and stearic acid. The chain is Acyl-CoA Delta(11) desaturase from Spodoptera littoralis (Egyptian cotton leafworm).